Reading from the N-terminus, the 122-residue chain is Lectin A (122 aa).

Residue Tyr-38 coordinates Ca(2+). An alpha-D-galactoside contacts are provided by Glu-44, Gln-57, and Asp-96. Residues Asp-96, Thr-100, Asp-103, and Asn-104 each contribute to the Ca(2+) site. Asp-103 provides a ligand contact to an alpha-D-galactoside.

Belongs to the LecA/PllA lectin family. As to quaternary structure, homotetramer.

Its function is as follows. Lectin that specifically binds alpha-galactoside-terminating glycoconjugates. Shows high apparent binding to the alpha-Gal epitope (Gal-alpha-1,3-Gal-beta-1,4-GlcNAc terminating glycans) as well as to Gal-alpha-1,4-GlcNAc and Gal-alpha-1,3-GalNAc. Gal-alpha-1,3-GalNAc may be one natural ligand bound by PllA both in the nematode symbiont and in infected insects. The protein is Lectin A of Photorhabdus laumondii subsp. laumondii (strain DSM 15139 / CIP 105565 / TT01) (Photorhabdus luminescens subsp. laumondii).